Here is a 294-residue protein sequence, read N- to C-terminus: Malate dehydrogenase (294 aa).

Residues glycine 7–glycine 12 and aspartate 32 each bind NAD(+). Positions 81 and 87 each coordinate substrate. Residues asparagine 94 and valine 117–asparagine 119 contribute to the NAD(+) site. Residues asparagine 119 and arginine 150 each contribute to the substrate site. The active-site Proton acceptor is histidine 172.

This sequence belongs to the LDH/MDH superfamily. Homodimer.

Its subcellular location is the cytoplasm. The enzyme catalyses (S)-malate + NAD(+) = oxaloacetate + NADH + H(+). Functionally, catalyzes the reversible oxidation of malate to oxaloacetate. Can also oxidize tartrate. The polypeptide is Malate dehydrogenase (mdh) (Archaeoglobus fulgidus (strain ATCC 49558 / DSM 4304 / JCM 9628 / NBRC 100126 / VC-16)).